Reading from the N-terminus, the 64-residue chain is Large ribosomal subunit protein bL33 (64 aa).

This sequence belongs to the bacterial ribosomal protein bL33 family.

This is Large ribosomal subunit protein bL33 from Synechococcus sp. (strain WH7803).